The chain runs to 437 residues: Sperm-associated antigen 4 protein (437 aa).

Over residues 1–12 (MRRSSRPGSASS) the composition is skewed to low complexity. The tract at residues 1 to 88 (MRRSSRPGSA…KPAPRSHNWQ (88 aa)) is disordered. Composition is skewed to polar residues over residues 19–31 (NFFSENSSMSITS) and 72–88 (WAGSSQQKPAPRSHNWQ). The next 2 helical transmembrane spans lie at 135–155 (FLSLLFQGLSVLLSLAGDVLV) and 166–186 (FLFTAVSLLSLFLSAFWLGLL). Residues 197–244 (KEMLTLSEYHERVRSQGQQLQQLQAELDKLHKEVSTVRAANSERVAKL) adopt a coiled-coil conformation. One can recognise an SUN domain in the interval 265-425 (GASIDLQKTS…YRVRAHGVRT (161 aa)).

As to quaternary structure, homodimer. Interacts with ODF1. May associate with microtubules. Interacts with SUN3 and SYNE1; suggesting the formation of a spermatogenesis-specific LINC complex; a SUN domain-based heterotrimer with SUN3 may associate with SYNE1. Interacts with SEPT12 and LMNB1; during spermatogenesis. Predominantly epressed in testis. Expressed in ejaculated spermatozoa (at protein level).

It localises to the membrane. It is found in the cytoplasm. The protein localises to the cytoskeleton. The protein resides in the flagellum axoneme. Its subcellular location is the nucleus envelope. It localises to the nucleus inner membrane. In terms of biological role, involved in spermatogenesis. Required for sperm head formation but not required to establish and maintain general polarity of the sperm head. Required for anchoring and organization of the manchette. Required for targeting of SUN3 and probably SYNE1 through a probable SUN1:SYNE3 LINC complex to the nuclear envelope and involved in accurate posterior sperm head localization of the complex. May anchor SUN3 the nuclear envelope. Involved in maintenance of the nuclear envelope integrity. May assist the organization and assembly of outer dense fibers (ODFs), a specific structure of the sperm tail. The polypeptide is Sperm-associated antigen 4 protein (SPAG4) (Homo sapiens (Human)).